A 103-amino-acid chain; its full sequence is N(4)-acetylcytidine amidohydrolase (103 aa).

The 87-residue stretch at threonine 6–glutamate 92 folds into the ASCH domain. Residue lysine 20 is the Proton acceptor of the active site. The Nucleophile role is filled by threonine 23. Residue glutamate 73 is the Proton donor of the active site.

Belongs to the N(4)-acetylcytidine amidohydrolase family.

It catalyses the reaction N(4)-acetylcytidine + H2O = cytidine + acetate + H(+). The enzyme catalyses N(4)-acetyl-2'-deoxycytidine + H2O = 2'-deoxycytidine + acetate + H(+). It carries out the reaction N(4)-acetylcytosine + H2O = cytosine + acetate + H(+). Catalyzes the hydrolysis of N(4)-acetylcytidine (ac4C). This Shewanella sp. (strain MR-4) protein is N(4)-acetylcytidine amidohydrolase.